A 189-amino-acid polypeptide reads, in one-letter code: Glycerol-3-phosphate acyltransferase (189 aa).

The next 5 membrane-spanning stretches (helical) occupy residues 1–21, 50–70, 77–97, 111–131, and 151–171; these read MFWLLALLAYLLGSLSFAIVL, KLAILTLLGDLCKGLLPVLLA, LHAQAWVGICAVLGHLFPLYF, MLMGLYFPAALLAIGAWLLTF, and LLAWREPEALLPISVLTVMIV.

Belongs to the PlsY family. As to quaternary structure, probably interacts with PlsX.

It is found in the cell inner membrane. The catalysed reaction is an acyl phosphate + sn-glycerol 3-phosphate = a 1-acyl-sn-glycero-3-phosphate + phosphate. Its pathway is lipid metabolism; phospholipid metabolism. Functionally, catalyzes the transfer of an acyl group from acyl-phosphate (acyl-PO(4)) to glycerol-3-phosphate (G3P) to form lysophosphatidic acid (LPA). This enzyme utilizes acyl-phosphate as fatty acyl donor, but not acyl-CoA or acyl-ACP. The protein is Glycerol-3-phosphate acyltransferase of Pseudomonas putida (strain ATCC 700007 / DSM 6899 / JCM 31910 / BCRC 17059 / LMG 24140 / F1).